The primary structure comprises 182 residues: Putative minor fimbrial subunit PmfF (182 aa).

An N-terminal signal peptide occupies residues 1-22; that stretch reads MKNSIIKSAITCLLLLSPSTFA.

This sequence belongs to the fimbrial protein family.

The protein localises to the fimbrium. In Proteus mirabilis (strain HI4320), this protein is Putative minor fimbrial subunit PmfF (pmfF).